The chain runs to 559 residues: 2-succinyl-5-enolpyruvyl-6-hydroxy-3-cyclohexene-1-carboxylate synthase (559 aa).

Belongs to the TPP enzyme family. MenD subfamily. Homodimer. Mg(2+) serves as cofactor. Requires Mn(2+) as cofactor. Thiamine diphosphate is required as a cofactor.

It catalyses the reaction isochorismate + 2-oxoglutarate + H(+) = 5-enolpyruvoyl-6-hydroxy-2-succinyl-cyclohex-3-ene-1-carboxylate + CO2. Its pathway is quinol/quinone metabolism; 1,4-dihydroxy-2-naphthoate biosynthesis; 1,4-dihydroxy-2-naphthoate from chorismate: step 2/7. It participates in quinol/quinone metabolism; menaquinone biosynthesis. Functionally, catalyzes the thiamine diphosphate-dependent decarboxylation of 2-oxoglutarate and the subsequent addition of the resulting succinic semialdehyde-thiamine pyrophosphate anion to isochorismate to yield 2-succinyl-5-enolpyruvyl-6-hydroxy-3-cyclohexene-1-carboxylate (SEPHCHC). The sequence is that of 2-succinyl-5-enolpyruvyl-6-hydroxy-3-cyclohexene-1-carboxylate synthase from Edwardsiella ictaluri (strain 93-146).